A 189-amino-acid polypeptide reads, in one-letter code: Development-specific protein LVN1.2 (189 aa).

In terms of tissue distribution, endoderm cells.

This is Development-specific protein LVN1.2 from Lytechinus variegatus (Green sea urchin).